The chain runs to 174 residues: Large ribosomal subunit protein uL10 (174 aa).

It belongs to the universal ribosomal protein uL10 family. Part of the ribosomal stalk of the 50S ribosomal subunit. The N-terminus interacts with L11 and the large rRNA to form the base of the stalk. The C-terminus forms an elongated spine to which L12 dimers bind in a sequential fashion forming a multimeric L10(L12)X complex.

Its function is as follows. Forms part of the ribosomal stalk, playing a central role in the interaction of the ribosome with GTP-bound translation factors. The chain is Large ribosomal subunit protein uL10 from Anaeromyxobacter dehalogenans (strain 2CP-1 / ATCC BAA-258).